A 328-amino-acid chain; its full sequence is Biotin synthase (328 aa).

One can recognise a Radical SAM core domain in the interval 41–260 (TAIETASLLS…VALARILMPA (220 aa)). [4Fe-4S] cluster-binding residues include Cys56, Cys60, and Cys63. [2Fe-2S] cluster-binding residues include Cys100, Cys131, Cys191, and Arg264.

This sequence belongs to the radical SAM superfamily. Biotin synthase family. Homodimer. Requires [4Fe-4S] cluster as cofactor. It depends on [2Fe-2S] cluster as a cofactor.

It carries out the reaction (4R,5S)-dethiobiotin + (sulfur carrier)-SH + 2 reduced [2Fe-2S]-[ferredoxin] + 2 S-adenosyl-L-methionine = (sulfur carrier)-H + biotin + 2 5'-deoxyadenosine + 2 L-methionine + 2 oxidized [2Fe-2S]-[ferredoxin]. It functions in the pathway cofactor biosynthesis; biotin biosynthesis; biotin from 7,8-diaminononanoate: step 2/2. Functionally, catalyzes the conversion of dethiobiotin (DTB) to biotin by the insertion of a sulfur atom into dethiobiotin via a radical-based mechanism. The chain is Biotin synthase from Cereibacter sphaeroides (strain ATCC 17029 / ATH 2.4.9) (Rhodobacter sphaeroides).